Consider the following 292-residue polypeptide: Protease HtpX homolog (292 aa).

Helical transmembrane passes span 4–24 and 38–58; these read IALF…VASL and LGAL…ISLL. A Zn(2+)-binding site is contributed by His-144. The active site involves Glu-145. His-148 is a binding site for Zn(2+). A run of 2 helical transmembrane segments spans residues 152–172 and 199–219; these read GDMV…VFLS and ITTI…VAWF. Glu-224 serves as a coordination point for Zn(2+).

The protein belongs to the peptidase M48B family. Zn(2+) is required as a cofactor.

The protein localises to the cell inner membrane. This is Protease HtpX homolog from Acidovorax ebreus (strain TPSY) (Diaphorobacter sp. (strain TPSY)).